The sequence spans 369 residues: Chorismate synthase (369 aa).

Arginine 48 and arginine 54 together coordinate NADP(+). FMN-binding positions include 125–127 (RSS), 238–239 (NA), glycine 278, 293–297 (KPTSS), and arginine 319.

The protein belongs to the chorismate synthase family. As to quaternary structure, homotetramer. FMNH2 serves as cofactor.

The enzyme catalyses 5-O-(1-carboxyvinyl)-3-phosphoshikimate = chorismate + phosphate. Its pathway is metabolic intermediate biosynthesis; chorismate biosynthesis; chorismate from D-erythrose 4-phosphate and phosphoenolpyruvate: step 7/7. Catalyzes the anti-1,4-elimination of the C-3 phosphate and the C-6 proR hydrogen from 5-enolpyruvylshikimate-3-phosphate (EPSP) to yield chorismate, which is the branch point compound that serves as the starting substrate for the three terminal pathways of aromatic amino acid biosynthesis. This reaction introduces a second double bond into the aromatic ring system. In Burkholderia mallei (strain NCTC 10229), this protein is Chorismate synthase.